A 123-amino-acid polypeptide reads, in one-letter code: MPTIQQLVRSARTRLSKKTKSPALKSCPQRRGVCTRVYTTTPKKPNSALRKVARVRLTSGFEVTAYIPGIGHNLQEHSVVLVRGGRVKDLPGVRYHIVRGTLDSAGVKDRSQSRSKYGVKRPK.

The protein belongs to the universal ribosomal protein uS12 family. In terms of assembly, part of the 30S ribosomal subunit.

It localises to the plastid. The protein localises to the chloroplast. With S4 and S5 plays an important role in translational accuracy. Located at the interface of the 30S and 50S subunits. The polypeptide is Small ribosomal subunit protein uS12c (rps12) (Chlorella vulgaris (Green alga)).